The chain runs to 450 residues: C4-dicarboxylate transport protein (450 aa).

8 consecutive transmembrane segments (helical) span residues 25-45 (VVFA…YGAA), 56-76 (LIKM…IASM), 90-110 (MAYF…VANV), 162-182 (ILQV…VGDA), 200-220 (LVNI…AFTI), 234-254 (LVLT…GAVA), 319-339 (IYMT…LTLG), and 367-387 (AATL…ILGV).

It belongs to the dicarboxylate/amino acid:cation symporter (DAACS) (TC 2.A.23) family.

It is found in the cell inner membrane. Functionally, responsible for the transport of dicarboxylates such as succinate, fumarate, and malate from the periplasm across the membrane. The protein is C4-dicarboxylate transport protein of Acidovorax ebreus (strain TPSY) (Diaphorobacter sp. (strain TPSY)).